Here is a 200-residue protein sequence, read N- to C-terminus: Large ribosomal subunit protein uL4 (200 aa).

The tract at residues 42–65 (TRAQKTRSEVSGGGAKPWRQKGTG) is disordered.

This sequence belongs to the universal ribosomal protein uL4 family. In terms of assembly, part of the 50S ribosomal subunit.

Functionally, one of the primary rRNA binding proteins, this protein initially binds near the 5'-end of the 23S rRNA. It is important during the early stages of 50S assembly. It makes multiple contacts with different domains of the 23S rRNA in the assembled 50S subunit and ribosome. Forms part of the polypeptide exit tunnel. The sequence is that of Large ribosomal subunit protein uL4 from Vibrio vulnificus (strain CMCP6).